Consider the following 176-residue polypeptide: Xanthine-guanine phosphoribosyltransferase (176 aa).

5-phospho-alpha-D-ribose 1-diphosphate-binding positions include 51 to 52 (RG), R88, and 111 to 119 (DDLVDSGKT). Position 88 (R88) interacts with GMP. Residue D112 coordinates Mg(2+). Guanine contacts are provided by D115 and I158. Xanthine contacts are provided by D115 and I158. GMP-binding positions include 115-119 (DSGKT) and 157-158 (WI).

This sequence belongs to the purine/pyrimidine phosphoribosyltransferase family. XGPT subfamily. In terms of assembly, homotetramer. It depends on Mg(2+) as a cofactor.

Its subcellular location is the cell inner membrane. It catalyses the reaction GMP + diphosphate = guanine + 5-phospho-alpha-D-ribose 1-diphosphate. The enzyme catalyses XMP + diphosphate = xanthine + 5-phospho-alpha-D-ribose 1-diphosphate. The catalysed reaction is IMP + diphosphate = hypoxanthine + 5-phospho-alpha-D-ribose 1-diphosphate. It functions in the pathway purine metabolism; GMP biosynthesis via salvage pathway; GMP from guanine: step 1/1. It participates in purine metabolism; XMP biosynthesis via salvage pathway; XMP from xanthine: step 1/1. Purine salvage pathway enzyme that catalyzes the transfer of the ribosyl-5-phosphate group from 5-phospho-alpha-D-ribose 1-diphosphate (PRPP) to the N9 position of the 6-oxopurines guanine and xanthine to form the corresponding ribonucleotides GMP (guanosine 5'-monophosphate) and XMP (xanthosine 5'-monophosphate), with the release of PPi. To a lesser extent, also acts on hypoxanthine. The polypeptide is Xanthine-guanine phosphoribosyltransferase (Ruegeria sp. (strain TM1040) (Silicibacter sp.)).